The sequence spans 1241 residues: ATP-dependent helicase/nuclease subunit A (1241 aa).

In terms of domain architecture, UvrD-like helicase ATP-binding spans 12 to 485 (SQWTDDQWKA…IDLAKNFRSR (474 aa)). 33–40 (AAAGSGKT) contributes to the ATP binding site. Positions 505–805 (GEIDYDADAE…RIMTIHKSKG (301 aa)) constitute a UvrD-like helicase C-terminal domain.

It belongs to the helicase family. AddA subfamily. In terms of assembly, heterodimer of AddA and AddB/RexB. Mg(2+) is required as a cofactor.

The catalysed reaction is Couples ATP hydrolysis with the unwinding of duplex DNA by translocating in the 3'-5' direction.. The enzyme catalyses ATP + H2O = ADP + phosphate + H(+). The heterodimer acts as both an ATP-dependent DNA helicase and an ATP-dependent, dual-direction single-stranded exonuclease. Recognizes the chi site generating a DNA molecule suitable for the initiation of homologous recombination. The AddA nuclease domain is required for chi fragment generation; this subunit has the helicase and 3' -&gt; 5' nuclease activities. This chain is ATP-dependent helicase/nuclease subunit A, found in Bacillus cereus (strain ATCC 10987 / NRS 248).